Here is a 448-residue protein sequence, read N- to C-terminus: tRNA(Ile)-lysidine synthase (448 aa).

An ATP-binding site is contributed by 25–30 (SGGSDS).

The protein belongs to the tRNA(Ile)-lysidine synthase family.

Its subcellular location is the cytoplasm. It carries out the reaction cytidine(34) in tRNA(Ile2) + L-lysine + ATP = lysidine(34) in tRNA(Ile2) + AMP + diphosphate + H(+). In terms of biological role, ligates lysine onto the cytidine present at position 34 of the AUA codon-specific tRNA(Ile) that contains the anticodon CAU, in an ATP-dependent manner. Cytidine is converted to lysidine, thus changing the amino acid specificity of the tRNA from methionine to isoleucine. The sequence is that of tRNA(Ile)-lysidine synthase from Brucella abortus (strain S19).